The following is a 239-amino-acid chain: Probable transcriptional regulatory protein Bcer98_0465 (239 aa).

It belongs to the TACO1 family. YeeN subfamily.

It is found in the cytoplasm. This is Probable transcriptional regulatory protein Bcer98_0465 from Bacillus cytotoxicus (strain DSM 22905 / CIP 110041 / 391-98 / NVH 391-98).